The following is a 58-amino-acid chain: UPF0391 membrane protein Patl_4137 (58 aa).

2 helical membrane-spanning segments follow: residues 4–24 and 27–47; these read WALT…GGIA and AAGI…LSLV.

The protein belongs to the UPF0391 family.

Its subcellular location is the cell membrane. The polypeptide is UPF0391 membrane protein Patl_4137 (Pseudoalteromonas atlantica (strain T6c / ATCC BAA-1087)).